The sequence spans 178 residues: Ribulose bisphosphate carboxylase small subunit, chloroplastic 1 (178 aa).

Residues 1–54 (MASSMISSPAVTTVNRAGAGMVAPFTGLKSMAGFPTRKTNNDITSIASNGGRVQ) constitute a chloroplast transit peptide.

This sequence belongs to the RuBisCO small chain family. Heterohexadecamer of 8 large and 8 small subunits.

It localises to the plastid. The protein localises to the chloroplast. In terms of biological role, ruBisCO catalyzes two reactions: the carboxylation of D-ribulose 1,5-bisphosphate, the primary event in carbon dioxide fixation, as well as the oxidative fragmentation of the pentose substrate. Both reactions occur simultaneously and in competition at the same active site. Although the small subunit is not catalytic it is essential for maximal activity. The polypeptide is Ribulose bisphosphate carboxylase small subunit, chloroplastic 1 (Glycine max (Soybean)).